Reading from the N-terminus, the 526-residue chain is MDVVPLPLLLGSLAVSAAVWYLVYFLRGGSGGDAARKRRPLPPGPRGWPVLGNLPQLGDKPHHTMCALARQYGPLFRLRFGCAEVVVAASAPVAAQFLRGHDANFSNRPPNSGAEHVAYNYQDLVFAPYGARWRALRKLCALHLFSAKALDDLRAVREGEVALMVRNLARQQAASVALGQEANVCATNTLARATIGHRVFAVDGGEGAREFKEMVVELMQLAGVFNVGDFVPALRWLDPQGVVAKMKRLHRRYDNMMNGFINERKAGAQPDGVAAGEHGNDLLSVLLARMQEEQKLDGDGEKITETDIKALLLNLFTAGTDTTSSTVEWALAELIRHPDVLKEAQHELDTVVGRGRLVSESDLPRLPYLTAVIKETFRLHPSTPLSLPREAAEECEVDGYRIPKGATLLVNVWAIARDPTQWPDPLQYQPSRFLPGRMHADVDVKGADFGLIPFGAGRRICAGLSWGLRMVTLMTATLVHGFDWTLANGATPDKLNMEEAYGLTLQRAVPLMVQPVPRLLPSAYGV.

The helical transmembrane segment at 6–26 (LPLLLGSLAVSAAVWYLVYFL) threads the bilayer. Cys-461 provides a ligand contact to heme.

Belongs to the cytochrome P450 family. The cofactor is heme.

The protein localises to the membrane. It catalyses the reaction a 3'-unsubstituted flavone + reduced [NADPH--hemoprotein reductase] + O2 = a 3'-hydroxyflavone + oxidized [NADPH--hemoprotein reductase] + H2O + H(+). It participates in secondary metabolite biosynthesis; flavonoid biosynthesis. Catalyzes the 3'-hydroxylation of the flavonoid B-ring to the 3',4'-hydroxylated state. Catalyzes the 3'-hydroxylation of apigenin to generate luteolin. This chain is Flavonoid 3'-monooxygenase CYP75B3, found in Oryza sativa subsp. japonica (Rice).